The sequence spans 622 residues: Probable potassium transport system protein Kup 2 (622 aa).

12 consecutive transmembrane segments (helical) span residues 9-29, 46-66, 99-119, 137-157, 169-189, 213-233, 247-267, 285-305, 337-357, 363-383, 396-416, and 419-439; these read LSGVTLAAIGVVYGDIGTSPL, PASILGFLSLIFWLLILVVSV, TPLLIILGLIGGSFFYGEVVI, PSLDPYIVPLSVLVLTLLFAI, FAPIMLTWFITLAVLGLNSIF, ASFFALGAVVLAITGVEALYA, WFMVVLPSLVLNYFGQGALLL, ALLPLLLLATLATVIASQAVI, IYIPVINWMLYISVVIVIMSF, LAAAYGIAVTGTMVLTSILSC, LVAALFVALLAIDVPLFAANL, and IFSGGWLPLTLGAVMFTVMTS.

Belongs to the HAK/KUP transporter (TC 2.A.72) family.

The protein localises to the cell inner membrane. It carries out the reaction K(+)(in) + H(+)(in) = K(+)(out) + H(+)(out). In terms of biological role, transport of potassium into the cell. Likely operates as a K(+):H(+) symporter. The protein is Probable potassium transport system protein Kup 2 of Aeromonas hydrophila subsp. hydrophila (strain ATCC 7966 / DSM 30187 / BCRC 13018 / CCUG 14551 / JCM 1027 / KCTC 2358 / NCIMB 9240 / NCTC 8049).